The sequence spans 122 residues: Small ribosomal subunit protein bS6 (122 aa).

A disordered region spans residues 99 to 122; sequence PSPMMKEVAREEAKKAAAQTEQAA.

This sequence belongs to the bacterial ribosomal protein bS6 family.

Its function is as follows. Binds together with bS18 to 16S ribosomal RNA. The sequence is that of Small ribosomal subunit protein bS6 from Ralstonia pickettii (strain 12J).